Consider the following 234-residue polypeptide: ATP-dependent dethiobiotin synthetase BioD (234 aa).

12–17 is an ATP binding site; sequence DVGKTI. Residue threonine 16 coordinates Mg(2+). Lysine 37 is an active-site residue. Residue threonine 41 participates in substrate binding. Residues aspartate 54 and 115-118 contribute to the ATP site; that span reads EGAG. Residues aspartate 54 and glutamate 115 each coordinate Mg(2+).

This sequence belongs to the dethiobiotin synthetase family. Homodimer. Mg(2+) is required as a cofactor.

Its subcellular location is the cytoplasm. It carries out the reaction (7R,8S)-7,8-diammoniononanoate + CO2 + ATP = (4R,5S)-dethiobiotin + ADP + phosphate + 3 H(+). It functions in the pathway cofactor biosynthesis; biotin biosynthesis; biotin from 7,8-diaminononanoate: step 1/2. Catalyzes a mechanistically unusual reaction, the ATP-dependent insertion of CO2 between the N7 and N8 nitrogen atoms of 7,8-diaminopelargonic acid (DAPA, also called 7,8-diammoniononanoate) to form a ureido ring. In Lysinibacillus sphaericus (strain C3-41), this protein is ATP-dependent dethiobiotin synthetase BioD.